A 101-amino-acid polypeptide reads, in one-letter code: Small ribosomal subunit protein uS14 (101 aa).

Belongs to the universal ribosomal protein uS14 family. As to quaternary structure, part of the 30S ribosomal subunit. Contacts proteins S3 and S10.

In terms of biological role, binds 16S rRNA, required for the assembly of 30S particles and may also be responsible for determining the conformation of the 16S rRNA at the A site. This chain is Small ribosomal subunit protein uS14, found in Chlamydia caviae (strain ATCC VR-813 / DSM 19441 / 03DC25 / GPIC) (Chlamydophila caviae).